Consider the following 124-residue polypeptide: Large ribosomal subunit protein bL12 (124 aa).

This sequence belongs to the bacterial ribosomal protein bL12 family. In terms of assembly, homodimer. Part of the ribosomal stalk of the 50S ribosomal subunit. Forms a multimeric L10(L12)X complex, where L10 forms an elongated spine to which 2 to 4 L12 dimers bind in a sequential fashion. Binds GTP-bound translation factors.

In terms of biological role, forms part of the ribosomal stalk which helps the ribosome interact with GTP-bound translation factors. Is thus essential for accurate translation. The chain is Large ribosomal subunit protein bL12 from Allorhizobium ampelinum (strain ATCC BAA-846 / DSM 112012 / S4) (Agrobacterium vitis (strain S4)).